The chain runs to 121 residues: Cell division protein FtsB (121 aa).

The Cytoplasmic segment spans residues 1-6 (MRNWRW). The chain crosses the membrane as a helical span at residues 7-24 (LLLVLAVLLAWLQYRFWF). Residues 25 to 121 (GPGNSGEVMM…AASADPVDHP (97 aa)) lie on the Periplasmic side of the membrane. The stretch at 31–66 (EVMMLEAQVAHQTRDNEGLRQRNQALAAEVKDLKDG) forms a coiled coil. Residues 98 to 121 (PPAAQEAAPPAQPPAASADPVDHP) form a disordered region.

It belongs to the FtsB family. Part of a complex composed of FtsB, FtsL and FtsQ.

It is found in the cell inner membrane. Its function is as follows. Essential cell division protein. May link together the upstream cell division proteins, which are predominantly cytoplasmic, with the downstream cell division proteins, which are predominantly periplasmic. The polypeptide is Cell division protein FtsB (Xanthomonas campestris pv. campestris (strain 8004)).